The chain runs to 139 residues: uncharacterized protein (139 aa).

Residues 1–32 form the signal peptide; it reads MEFHDDKKNELQKKEEIITEAIDTLFQSSAFG. Positions 44-139 constitute a sHSP domain; that stretch reads SSLKDVQTTI…TLFFPKNKHE (96 aa).

This sequence belongs to the small heat shock protein (HSP20) family.

This is an uncharacterized protein from Bacillus subtilis (strain 168).